Here is a 431-residue protein sequence, read N- to C-terminus: Glutamyl-tRNA(Gln) amidotransferase subunit A (431 aa).

Active-site charge relay system residues include lysine 37 and serine 112. Serine 136 (acyl-ester intermediate) is an active-site residue.

The protein belongs to the amidase family. GatA subfamily. Heterotrimer of A, B and C subunits.

It catalyses the reaction L-glutamyl-tRNA(Gln) + L-glutamine + ATP + H2O = L-glutaminyl-tRNA(Gln) + L-glutamate + ADP + phosphate + H(+). Functionally, allows the formation of correctly charged Gln-tRNA(Gln) through the transamidation of misacylated Glu-tRNA(Gln) in organisms which lack glutaminyl-tRNA synthetase. The reaction takes place in the presence of glutamine and ATP through an activated gamma-phospho-Glu-tRNA(Gln). This is Glutamyl-tRNA(Gln) amidotransferase subunit A from Methanospirillum hungatei JF-1 (strain ATCC 27890 / DSM 864 / NBRC 100397 / JF-1).